A 178-amino-acid chain; its full sequence is MAATEQSLAPAGSSAPPSGKEEGAGPSSGTEGDPAGSSSTPEAPSIPDSSNPSATVPEANVKPPAAGSAALDLPIGPAPQGPAPVAEASPRSPPGPGGSRPGPETFRQRFRQFRYQDAAGPREAFRQLRELSRQWLRPDIRTKEQIVEMLVQEQLLAILPEAARARRLRRRTDVRITG.

The segment at 1–107 (MAATEQSLAP…GSRPGPETFR (107 aa)) is disordered. Residues 9–18 (APAGSSAPPS) show a composition bias toward low complexity. Positions 36 to 54 (GSSSTPEAPSIPDSSNPSA) are enriched in polar residues. The SCAN box domain occupies 107–178 (RQRFRQFRYQ…RRRTDVRITG (72 aa)).

In terms of assembly, interacts with ZNF202.

The protein localises to the nucleus. Its function is as follows. May regulate transcriptional activity. In Bos taurus (Bovine), this protein is SCAN domain-containing protein 1 (SCAND1).